A 227-amino-acid polypeptide reads, in one-letter code: MVKSSLQRILNSHCFAREKEGDKPSATVHATRTMPLLSLHSRGGRSSESSRVSINCCSNLGPGPRWCSDVPHPPLKIPGGRGNSQRDHNLSANLFYSDNRLNVTEELTSNNKTRIFNVQSRLTEAKHINWRAVLSNSCLYVEIPGGALPEGSKDSFAVLLEFAEEQLHVDHVFICFHKNRDDRAALLRTFSFLGFEIVRPGHPLVPKRPDACFMAYTFERESSGEEE.

The segment at 20–50 (EGDKPSATVHATRTMPLLSLHSRGGRSSESS) is disordered. Low complexity predominate over residues 36 to 50 (LLSLHSRGGRSSESS).

It belongs to the ODC antizyme family. Interacts with ODC1 and thereby sterically blocks ODC homodimerization. Forms a ternary complex with PSMB4 and OAZ1 before PSMB4 is incorporated into the 20S proteasome. Interacts with AZIN2; this interaction disrupts the interaction between the antizyme and ODC1. Interacts with FAM171A1.

Functionally, ornithine decarboxylase (ODC) antizyme protein that negatively regulates ODC activity and intracellular polyamine biosynthesis and uptake in response to increased intracellular polyamine levels. Binds to ODC monomers, inhibiting the assembly of the functional ODC homodimer, and targets the monomers for ubiquitin-independent proteolytic destruction by the 26S proteasome. Triggers ODC degradation by inducing the exposure of a cryptic proteasome-interacting surface of ODC. Stabilizes AZIN2 by interfering with its ubiquitination. Also inhibits cellular uptake of polyamines by inactivating the polyamine uptake transporter. SMAD1/OAZ1/PSMB4 complex mediates the degradation of the CREBBP/EP300 repressor SNIP1. Involved in the translocation of AZIN2 from ER-Golgi intermediate compartment (ERGIC) to the cytosol. This chain is Ornithine decarboxylase antizyme 1 (OAZ1), found in Bos taurus (Bovine).